A 213-amino-acid chain; its full sequence is Cytochrome c biogenesis ATP-binding export protein CcmA (213 aa).

Residues 8 to 213 (LQATALTCER…RDIDLGQWAA (206 aa)) enclose the ABC transporter domain. Position 40–47 (40–47 (GPNGSGKT)) interacts with ATP.

It belongs to the ABC transporter superfamily. CcmA exporter (TC 3.A.1.107) family. As to quaternary structure, the complex is composed of two ATP-binding proteins (CcmA) and two transmembrane proteins (CcmB).

It localises to the cell inner membrane. The catalysed reaction is heme b(in) + ATP + H2O = heme b(out) + ADP + phosphate + H(+). Its function is as follows. Part of the ABC transporter complex CcmAB involved in the biogenesis of c-type cytochromes; once thought to export heme, this seems not to be the case, but its exact role is uncertain. Responsible for energy coupling to the transport system. The protein is Cytochrome c biogenesis ATP-binding export protein CcmA of Pseudomonas savastanoi pv. phaseolicola (strain 1448A / Race 6) (Pseudomonas syringae pv. phaseolicola (strain 1448A / Race 6)).